We begin with the raw amino-acid sequence, 96 residues long: Uteroglobin (96 aa).

The first 21 residues, 1–21 (MKIAITMAVVMLSVCCSSASS), serve as a signal peptide directing secretion.

It belongs to the secretoglobin family. As to quaternary structure, antiparallel homodimer; disulfide-linked. Interaction with LMBR1L is controversial.

The protein resides in the secreted. In terms of biological role, binds phosphatidylcholine, phosphatidylinositol, polychlorinated biphenyls (PCB) and weakly progesterone, potent inhibitor of phospholipase A2. The polypeptide is Uteroglobin (SCGB1A1) (Mesocricetus auratus (Golden hamster)).